The chain runs to 60 residues: Large ribosomal subunit protein uL30 (60 aa).

This sequence belongs to the universal ribosomal protein uL30 family. Part of the 50S ribosomal subunit.

This chain is Large ribosomal subunit protein uL30, found in Dehalococcoides mccartyi (strain ATCC BAA-2100 / JCM 16839 / KCTC 5957 / BAV1).